The primary structure comprises 249 residues: MSQNKNTICLFDVDDTLTKPRNAITNEMKELLASLRTKIKIGVVGGSNFNKIKEQLGENFINDFDYVFAENGLIAYKDGSLLEIQDIKKYLGEENIKKFINFVLHYVADLDIPIKRGTFVEFRNGMLNISPIGRNCSQQEREEFEKYDLEHKIRSTMVSILKEEFKSFGLQYSIGGQISFDVFPIGWDKTYCLRHLPEDEFKTLYFFGDKTFLGGNDYEIANHPRITQSFTVKSPANTLAILNDFFFKK.

The active-site Nucleophile is the aspartate 12. Mg(2+)-binding residues include aspartate 12 and aspartate 14. Aspartate 14 acts as the Proton donor/acceptor in catalysis. Alpha-D-mannose 1-phosphate-binding residues include arginine 21, arginine 123, arginine 134, arginine 141, serine 179, and aspartate 181. Aspartate 209 contributes to the Mg(2+) binding site.

Belongs to the eukaryotic PMM family. As to quaternary structure, homodimer.

It is found in the cytoplasm. It carries out the reaction alpha-D-mannose 1-phosphate = D-mannose 6-phosphate. It participates in nucleotide-sugar biosynthesis; GDP-alpha-D-mannose biosynthesis; alpha-D-mannose 1-phosphate from D-fructose 6-phosphate: step 2/2. Its function is as follows. Involved in the synthesis of the GDP-mannose and dolichol-phosphate-mannose required for a number of critical mannosyl transfer reactions. This is Phosphomannomutase 2 (pmmB) from Dictyostelium discoideum (Social amoeba).